A 64-amino-acid chain; its full sequence is Alpha-mammal toxin BmK-M8 (64 aa).

The region spanning 2–64 is the LCN-type CS-alpha/beta domain; that stretch reads RDAYIADSEN…ERIKEPGKCG (63 aa). 4 disulfides stabilise this stretch: Cys12–Cys63, Cys16–Cys36, Cys22–Cys46, and Cys26–Cys48.

The protein belongs to the long (4 C-C) scorpion toxin superfamily. Sodium channel inhibitor family. Alpha subfamily. Expressed by the venom gland.

The protein resides in the secreted. Functionally, alpha toxins bind voltage-independently at site-3 of sodium channels (Nav) and inhibit the inactivation of the activated channels, thereby blocking neuronal transmission. This acidic toxin has a weak toxicity and is active against mammals. The polypeptide is Alpha-mammal toxin BmK-M8 (Olivierus martensii (Manchurian scorpion)).